The sequence spans 435 residues: MIVNVIGAGLAGSEVAYNLGKRGIRVRLFEMRPKKMTEVHKTGYFAELVCSNSLKSEDITNAEGLLKAEMRLMGSITLEAAEKARVPSGKALAVDRNIFAKEVTEVIERLESVEIIREEVTEFDPEEGIWVVATGPATSDGLLPFLKKLLGDDLLFFFDAVSPIVTFESIDMECAFWGDRFGKGKDYINCPLTKEEYEEFWKALVEAEVIEMEDFDRKLLFERCQPIEEIARSGKDALRYGPLRPTGLVDPRTGKEPYAVVQLRREDKEGRFYSLVGFQTRLKWSEQKRVLRKIPCLRNAEIVRYGVMHRNVYINSPKLLDIFFRLKKHPNIFFAGQITGVEGYMESAASGIYVAYNVHRILKGLSPLKLPEETMMGALFSYIIEKVEGDLKPMYANFGLLPPLKVRVKDKFEKRKKLAERAIETMKKFLEENPW.

Residue 7–12 (GAGLAG) coordinates FAD.

The protein belongs to the MnmG family. TrmFO subfamily. The cofactor is FAD.

It localises to the cytoplasm. The catalysed reaction is uridine(54) in tRNA + (6R)-5,10-methylene-5,6,7,8-tetrahydrofolate + NADH + H(+) = 5-methyluridine(54) in tRNA + (6S)-5,6,7,8-tetrahydrofolate + NAD(+). It carries out the reaction uridine(54) in tRNA + (6R)-5,10-methylene-5,6,7,8-tetrahydrofolate + NADPH + H(+) = 5-methyluridine(54) in tRNA + (6S)-5,6,7,8-tetrahydrofolate + NADP(+). Functionally, catalyzes the folate-dependent formation of 5-methyl-uridine at position 54 (M-5-U54) in all tRNAs. In Thermotoga maritima (strain ATCC 43589 / DSM 3109 / JCM 10099 / NBRC 100826 / MSB8), this protein is Methylenetetrahydrofolate--tRNA-(uracil-5-)-methyltransferase TrmFO.